Here is a 971-residue protein sequence, read N- to C-terminus: Translation initiation factor IF-2 (971 aa).

The disordered stretch occupies residues 39–379 (DQDANRLRTR…APRGNRRNVK (341 aa)). Basic and acidic residues predominate over residues 53-63 (QGKEQAVEPRK). Positions 65–75 (VPSQESKNLTQ) are enriched in polar residues. Residues 310-326 (RPQGQRPMGDRPQGQRP) show a composition bias toward low complexity. Residues 342-370 (PPKRQIGEKKKPQDRNFERKKEMEKEIRA) are compositionally biased toward basic and acidic residues. A tr-type G domain is found at 471–640 (SRPPVVTVMG…LLVAEIKELK (170 aa)). Positions 480–487 (GHVDHGKT) are G1. GTP is bound at residue 480-487 (GHVDHGKT). The G2 stretch occupies residues 505–509 (GITQH). The interval 526–529 (DTPG) is G3. GTP-binding positions include 526–530 (DTPGH) and 580–583 (NKID). Residues 580 to 583 (NKID) are G4. Positions 616 to 618 (SAK) are G5.

Belongs to the TRAFAC class translation factor GTPase superfamily. Classic translation factor GTPase family. IF-2 subfamily.

Its subcellular location is the cytoplasm. Its function is as follows. One of the essential components for the initiation of protein synthesis. Protects formylmethionyl-tRNA from spontaneous hydrolysis and promotes its binding to the 30S ribosomal subunits. Also involved in the hydrolysis of GTP during the formation of the 70S ribosomal complex. The chain is Translation initiation factor IF-2 from Desulfitobacterium hafniense (strain Y51).